Here is a 508-residue protein sequence, read N- to C-terminus: Ribose import ATP-binding protein RbsA 2 (508 aa).

2 ABC transporter domains span residues 6-241 and 254-499; these read LTIH…VGRE and ERSG…SGMG. ATP is bound at residue 38–45; the sequence is GENGAGKS.

Belongs to the ABC transporter superfamily. Ribose importer (TC 3.A.1.2.1) family. As to quaternary structure, the complex is composed of an ATP-binding protein (RbsA), two transmembrane proteins (RbsC) and a solute-binding protein (RbsB).

Its subcellular location is the cell inner membrane. It carries out the reaction D-ribose(out) + ATP + H2O = D-ribose(in) + ADP + phosphate + H(+). In terms of biological role, part of the ABC transporter complex RbsABC involved in ribose import. Responsible for energy coupling to the transport system. This Rhizobium etli (strain ATCC 51251 / DSM 11541 / JCM 21823 / NBRC 15573 / CFN 42) protein is Ribose import ATP-binding protein RbsA 2.